Consider the following 234-residue polypeptide: MIVLAGLGNPGSQYAGNRHNIGFMALDAIHRRHSFSPWSKKFKAEIADGTLAGEKVLLIKPQTFMNLSGESVGEALRFYKLGPEQLVAIYDELDLLPGKARIKLGGGHGGHNGIKSLDAHCGLNYRRLRLGIGHPGDKSRVQAHVLGDFGKLDAEWLDPLLETLAENADMLVRGEDSQLMNKLALATGTKADEEKPKPAKSHIHQARNGVQPKKLPETGPMAEMLKKMFGPKKD.

Residue Tyr14 participates in tRNA binding. The active-site Proton acceptor is the His19. 3 residues coordinate tRNA: Phe64, Asn66, and Asn112. The interval 187-234 is disordered; it reads TGTKADEEKPKPAKSHIHQARNGVQPKKLPETGPMAEMLKKMFGPKKD.

It belongs to the PTH family. In terms of assembly, monomer.

It localises to the cytoplasm. It catalyses the reaction an N-acyl-L-alpha-aminoacyl-tRNA + H2O = an N-acyl-L-amino acid + a tRNA + H(+). In terms of biological role, hydrolyzes ribosome-free peptidyl-tRNAs (with 1 or more amino acids incorporated), which drop off the ribosome during protein synthesis, or as a result of ribosome stalling. Functionally, catalyzes the release of premature peptidyl moieties from peptidyl-tRNA molecules trapped in stalled 50S ribosomal subunits, and thus maintains levels of free tRNAs and 50S ribosomes. This chain is Peptidyl-tRNA hydrolase, found in Allorhizobium ampelinum (strain ATCC BAA-846 / DSM 112012 / S4) (Agrobacterium vitis (strain S4)).